Consider the following 523-residue polypeptide: Jerky protein homolog-like (523 aa).

The region spanning 1-52 is the HTH psq-type domain; it reads MSGKRKRVVLTIKDKLDIIKKLEDGGSSKQLAVIYGIGETTVRDIRKNKEKI. 2 consecutive DNA-binding regions (H-T-H motif) follow at residues 28-48 and 100-132; these read SKQLAVIYGIGETTVRDIRKN and PICAKRAEFFFYALGMDGDFNPSAGWLTRFKQR. The region spanning 67–139 is the HTH CENPB-type domain; the sequence is KRKSMKPSMY…KQRHSIREIN (73 aa). Positions 168 to 385 constitute a DDE-1 domain; the sequence is LQPEQIYNAD…VKPVTISRAW (218 aa).

This sequence belongs to the tigger transposable element derived protein family.

The protein localises to the nucleus. This Mus musculus (Mouse) protein is Jerky protein homolog-like (Jrkl).